The primary structure comprises 742 residues: Phosphoribosylformylglycinamidine synthase subunit PurL (742 aa).

H50 is an active-site residue. Residues Y53 and K92 each contribute to the ATP site. A Mg(2+)-binding site is contributed by E94. Substrate is bound by residues 95 to 98 (SHNH) and R117. H96 acts as the Proton acceptor in catalysis. D118 contacts Mg(2+). Q241 is a binding site for substrate. Position 269 (D269) interacts with Mg(2+). 313–315 (ESQ) serves as a coordination point for substrate. 2 residues coordinate ATP: D494 and G531. N532 lines the Mg(2+) pocket. S534 serves as a coordination point for substrate.

The protein belongs to the FGAMS family. Monomer. Part of the FGAM synthase complex composed of 1 PurL, 1 PurQ and 2 PurS subunits.

It localises to the cytoplasm. It catalyses the reaction N(2)-formyl-N(1)-(5-phospho-beta-D-ribosyl)glycinamide + L-glutamine + ATP + H2O = 2-formamido-N(1)-(5-O-phospho-beta-D-ribosyl)acetamidine + L-glutamate + ADP + phosphate + H(+). It participates in purine metabolism; IMP biosynthesis via de novo pathway; 5-amino-1-(5-phospho-D-ribosyl)imidazole from N(2)-formyl-N(1)-(5-phospho-D-ribosyl)glycinamide: step 1/2. Part of the phosphoribosylformylglycinamidine synthase complex involved in the purines biosynthetic pathway. Catalyzes the ATP-dependent conversion of formylglycinamide ribonucleotide (FGAR) and glutamine to yield formylglycinamidine ribonucleotide (FGAM) and glutamate. The FGAM synthase complex is composed of three subunits. PurQ produces an ammonia molecule by converting glutamine to glutamate. PurL transfers the ammonia molecule to FGAR to form FGAM in an ATP-dependent manner. PurS interacts with PurQ and PurL and is thought to assist in the transfer of the ammonia molecule from PurQ to PurL. In Sinorhizobium fredii (strain NBRC 101917 / NGR234), this protein is Phosphoribosylformylglycinamidine synthase subunit PurL.